We begin with the raw amino-acid sequence, 467 residues long: tRNA modification GTPase MnmE (467 aa).

(6S)-5-formyl-5,6,7,8-tetrahydrofolate-binding residues include Arg-30, Glu-92, and Arg-131. Residues 226 to 388 form the TrmE-type G domain; that stretch reads GLKVAIIGRP…LEAAILNAVN (163 aa). Asn-236 provides a ligand contact to K(+). GTP contacts are provided by residues 236-241, 255-261, and 280-283; these read NVGKSS, TDLPGTT, and DTAG. Ser-240 lines the Mg(2+) pocket. K(+)-binding residues include Thr-255, Leu-257, and Thr-260. Position 261 (Thr-261) interacts with Mg(2+). Lys-467 provides a ligand contact to (6S)-5-formyl-5,6,7,8-tetrahydrofolate.

Belongs to the TRAFAC class TrmE-Era-EngA-EngB-Septin-like GTPase superfamily. TrmE GTPase family. As to quaternary structure, homodimer. Heterotetramer of two MnmE and two MnmG subunits. K(+) serves as cofactor.

The protein localises to the cytoplasm. Its function is as follows. Exhibits a very high intrinsic GTPase hydrolysis rate. Involved in the addition of a carboxymethylaminomethyl (cmnm) group at the wobble position (U34) of certain tRNAs, forming tRNA-cmnm(5)s(2)U34. This Trichodesmium erythraeum (strain IMS101) protein is tRNA modification GTPase MnmE.